The sequence spans 1154 residues: Nitric oxide synthase, inducible (1154 aa).

Residues 22–58 (KDINNNVEKPPGATPSPSTQDDLKNHKHHNDSPQPLT) form a disordered region. Positions 23–27 (DINNN) match the DINNN-motif; mediates interaction with SPSB1, SPSB2 and SPSB4 motif. Zn(2+)-binding residues include C107 and C112. Position 197 (C197) interacts with heme b. L-arginine contacts are provided by Q260, W369, Y370, and E374. The (6R)-L-erythro-5,6,7,8-tetrahydrobiopterin site is built by R378, I459, W460, and F473. Y488 contributes to the heme b binding site. The tract at residues 512–532 (LKVLVKAVLFASMLMRKTMAS) is calmodulin-binding. Positions 536 to 674 (VTILFATETG…AFRCWAVQTF (139 aa)) constitute a Flavodoxin-like domain. Residues T542, E543, T544, K546, and S547 each coordinate FMN. At Y572 the chain carries Phosphotyrosine. 5 residues coordinate FMN: S588, T589, S625, C632, and E658. Positions 727–967 (KNVFTLRLKS…VRSAGNFKLP (241 aa)) constitute an FAD-binding FR-type domain. Residue R747 coordinates NADP(+). H769, R903, Y905, S906, T921, A923, Y927, V940, C941, and S942 together coordinate FAD. T981, R1014, S1043, R1044, K1050, Y1052, Q1054, and D1087 together coordinate NADP(+).

This sequence belongs to the NOS family. As to quaternary structure, homodimer. Interacts with NHERF1. Interacts with GAPDH; induced by oxidatively-modified low-densitity lipoprotein (LDL(ox)). Interacts with S100A8 and S100A9 to form the iNOS-S100A8/9 transnitrosylase complex. Interacts with SPSB1, SPSB2 and SPSB4. Interacts with ELOC and CUL5 in the presence of SPSB1 or SPSB2 or SPSB4. Forms a complex with ASL, ASS1 and HSP90AA1; the complex regulates cell-autonomous L-arginine synthesis and citrulline recycling while channeling extracellular L-arginine to nitric oxide synthesis pathway. The cofactor is heme b. Requires FAD as cofactor. FMN serves as cofactor. (6R)-L-erythro-5,6,7,8-tetrahydrobiopterin is required as a cofactor. In terms of processing, polyubiquitinated; mediated by SPSB1, SPSB2 and SPSB4, leading to proteasomal degradation.

The protein resides in the cytoplasm. The protein localises to the cytosol. The enzyme catalyses 2 L-arginine + 3 NADPH + 4 O2 + H(+) = 2 L-citrulline + 2 nitric oxide + 3 NADP(+) + 4 H2O. Its activity is regulated as follows. Regulated by calcium/calmodulin. In terms of biological role, produces nitric oxide (NO) which is a messenger molecule with diverse functions throughout the body. In macrophages, NO mediates tumoricidal and bactericidal actions. Also has nitrosylase activity and mediates cysteine S-nitrosylation of cytoplasmic target proteins such PTGS2/COX2. As component of the iNOS-S100A8/9 transnitrosylase complex involved in the selective inflammatory stimulus-dependent S-nitrosylation of GAPDH implicated in regulation of the GAIT complex activity and probably multiple targets including ANXA5, EZR, MSN and VIM. Involved in inflammation, enhances the synthesis of pro-inflammatory mediators such as IL6 and IL8. The sequence is that of Nitric oxide synthase, inducible (NOS2) from Canis lupus familiaris (Dog).